The sequence spans 463 residues: Probable ECA polymerase (463 aa).

Transmembrane regions (helical) follow at residues 6–26 (FGGL…LTWM), 39–59 (FSLL…VLVF), 65–85 (VVPV…YAVY), 112–132 (ANLT…IFFL), 154–174 (GVAL…VYFL), 180–200 (AWLL…VIVG), 201–221 (GTRA…IVRG), 222–242 (WITL…MFWL), 340–360 (LVVM…GLVI), 377–397 (YKAA…IVLT), and 408–428 (VVFF…LYWL).

This sequence belongs to the WzyE family. As to quaternary structure, probably part of a complex composed of WzxE, WzyE and WzzE.

Its subcellular location is the cell inner membrane. Its pathway is bacterial outer membrane biogenesis; enterobacterial common antigen biosynthesis. Functionally, probably involved in the polymerization of enterobacterial common antigen (ECA) trisaccharide repeat units. In Pectobacterium atrosepticum (strain SCRI 1043 / ATCC BAA-672) (Erwinia carotovora subsp. atroseptica), this protein is Probable ECA polymerase.